Reading from the N-terminus, the 292-residue chain is Lipoyl synthase (292 aa).

Residues Cys38, Cys43, Cys49, Cys64, Cys68, Cys71, and Ser277 each coordinate [4Fe-4S] cluster. The Radical SAM core domain occupies 50-266 (WSKGTATFML…KNRAESLGFR (217 aa)).

The protein belongs to the radical SAM superfamily. Lipoyl synthase family. [4Fe-4S] cluster serves as cofactor.

The protein localises to the cytoplasm. It carries out the reaction [[Fe-S] cluster scaffold protein carrying a second [4Fe-4S](2+) cluster] + N(6)-octanoyl-L-lysyl-[protein] + 2 oxidized [2Fe-2S]-[ferredoxin] + 2 S-adenosyl-L-methionine + 4 H(+) = [[Fe-S] cluster scaffold protein] + N(6)-[(R)-dihydrolipoyl]-L-lysyl-[protein] + 4 Fe(3+) + 2 hydrogen sulfide + 2 5'-deoxyadenosine + 2 L-methionine + 2 reduced [2Fe-2S]-[ferredoxin]. It participates in protein modification; protein lipoylation via endogenous pathway; protein N(6)-(lipoyl)lysine from octanoyl-[acyl-carrier-protein]: step 2/2. Its function is as follows. Catalyzes the radical-mediated insertion of two sulfur atoms into the C-6 and C-8 positions of the octanoyl moiety bound to the lipoyl domains of lipoate-dependent enzymes, thereby converting the octanoylated domains into lipoylated derivatives. In Chlorobium limicola (strain DSM 245 / NBRC 103803 / 6330), this protein is Lipoyl synthase.